The chain runs to 676 residues: Zinc finger CCCH domain-containing protein 38 (676 aa).

Disordered stretches follow at residues 1–134 (MEMS…DHLF), 172–217 (SSDY…RSSN), 245–307 (RKQP…SWID), 487–506 (SVQPNQATTQSNVVSSNPNQ), and 533–594 (IQEV…DPKG). The span at 12-21 (SKWDSKEDTH) shows a compositional bias: basic and acidic residues. Positions 58-79 (RVSQNNDNSYFSEQDGTRQQFV) are enriched in polar residues. Composition is skewed to basic and acidic residues over residues 101–110 (ARRDAGSYDR), 124–134 (EFNKRGSDHLF), and 192–212 (SEFTGEKETQRRDGGDGEGGF). The C3H1-type zinc-finger motif lies at 214 to 243 (RSSNIPCKFFAAGTGFCRNGKYCRFSHHVA). Positions 251–262 (NNNNFYRQDNNN) are enriched in low complexity. Residues 269–278 (KWNDVERLDN) are compositionally biased toward basic and acidic residues. The span at 538–562 (LDPKENGDKKTDEASKEEEGKKTGE) shows a compositional bias: basic and acidic residues. Over residues 563–583 (DTNDAENVVDEDEDGDDDGSD) the composition is skewed to acidic residues. The segment covering 584–594 (EENKKEKDPKG) has biased composition (basic and acidic residues).

The sequence is that of Zinc finger CCCH domain-containing protein 38 from Arabidopsis thaliana (Mouse-ear cress).